The primary structure comprises 266 residues: 4-hydroxy-tetrahydrodipicolinate reductase (266 aa).

Residue 10 to 15 (GPRGRM) coordinates NAD(+). Residue lysine 38 participates in NADP(+) binding. NAD(+)-binding positions include 99-101 (GTT) and 125-128 (APNF). Histidine 155 (proton donor/acceptor) is an active-site residue. A (S)-2,3,4,5-tetrahydrodipicolinate-binding site is contributed by histidine 156. The active-site Proton donor is the lysine 159. 165 to 166 (GT) is a (S)-2,3,4,5-tetrahydrodipicolinate binding site.

This sequence belongs to the DapB family.

It localises to the cytoplasm. The enzyme catalyses (S)-2,3,4,5-tetrahydrodipicolinate + NAD(+) + H2O = (2S,4S)-4-hydroxy-2,3,4,5-tetrahydrodipicolinate + NADH + H(+). It carries out the reaction (S)-2,3,4,5-tetrahydrodipicolinate + NADP(+) + H2O = (2S,4S)-4-hydroxy-2,3,4,5-tetrahydrodipicolinate + NADPH + H(+). Its pathway is amino-acid biosynthesis; L-lysine biosynthesis via DAP pathway; (S)-tetrahydrodipicolinate from L-aspartate: step 4/4. In terms of biological role, catalyzes the conversion of 4-hydroxy-tetrahydrodipicolinate (HTPA) to tetrahydrodipicolinate. The sequence is that of 4-hydroxy-tetrahydrodipicolinate reductase from Bacillus anthracis (strain A0248).